The following is a 1318-amino-acid chain: DNA-directed RNA polymerase subunit beta' (1318 aa).

The Zn(2+) site is built by Cys-60, Cys-62, Cys-75, and Cys-78. Mg(2+) contacts are provided by Asp-535, Asp-537, and Asp-539. Residues Cys-890, Cys-967, Cys-974, and Cys-977 each coordinate Zn(2+).

Belongs to the RNA polymerase beta' chain family. As to quaternary structure, the RNAP catalytic core consists of 2 alpha, 1 beta, 1 beta' and 1 omega subunit. When a sigma factor is associated with the core the holoenzyme is formed, which can initiate transcription. Requires Mg(2+) as cofactor. It depends on Zn(2+) as a cofactor.

It carries out the reaction RNA(n) + a ribonucleoside 5'-triphosphate = RNA(n+1) + diphosphate. Its function is as follows. DNA-dependent RNA polymerase catalyzes the transcription of DNA into RNA using the four ribonucleoside triphosphates as substrates. The chain is DNA-directed RNA polymerase subunit beta' from Rhodococcus jostii (strain RHA1).